The sequence spans 100 residues: Integration host factor subunit alpha (100 aa).

The tract at residues 53–72 (FQLRDKPQRPGRNPKTGEEV) is disordered.

This sequence belongs to the bacterial histone-like protein family. Heterodimer of an alpha and a beta chain.

Functionally, this protein is one of the two subunits of integration host factor, a specific DNA-binding protein that functions in genetic recombination as well as in transcriptional and translational control. The sequence is that of Integration host factor subunit alpha from Neisseria gonorrhoeae (strain ATCC 700825 / FA 1090).